The following is a 647-amino-acid chain: C2H2 finger domain transcription factor USV101 (647 aa).

A compositionally biased stretch (basic and acidic residues) spans 1–10 (MSFVAPDDRA). Residues 1-132 (MSFVAPDDRA…ATGYTPDGQP (132 aa)) are disordered. Polar residues-rich tracts occupy residues 27-54 (ESTS…SPNQ) and 66-84 (SSHS…STAY). Over residues 97–122 (PTQQQQQQQSEQHIPSPPSSSNRPPS) the composition is skewed to low complexity. 2 consecutive C2H2-type zinc fingers follow at residues 144–169 (FRCR…VRKH) and 175–197 (FPCH…ATVH). The disordered stretch occupies residues 220–647 (QRASREQRRR…VKQQDDKKTQ (428 aa)). Residues 222–248 (ASREQRRRGEVVEVPKGAVERRRETRK) are compositionally biased toward basic and acidic residues. Positions 249–259 (AQAAAAQAAAA) are enriched in low complexity. A compositionally biased stretch (polar residues) spans 261–278 (GHSQQNSPYAQYHESQWN). Low complexity-rich tracts occupy residues 312–327 (SSSA…YDSA), 404–414 (HGAYPPHDAAA), and 421–434 (GYYH…GSYP). Residues 504–515 (RAEDDFGKDDRK) are compositionally biased toward basic and acidic residues. Residues 521–540 (SPSNSQVPDSSTAAHANGAH) are compositionally biased toward low complexity. Basic and acidic residues predominate over residues 628-647 (VDKEREKKEEVKQQDDKKTQ).

The protein localises to the nucleus. Its subcellular location is the cytoplasm. Its function is as follows. Transcription factor that promotes pheromone gene expression, which results in a subsequent increase in cell fusion. Also promotes production of melanin and capsule and thereby is required for full virulence. The chain is C2H2 finger domain transcription factor USV101 from Cryptococcus neoformans var. grubii serotype A (strain H99 / ATCC 208821 / CBS 10515 / FGSC 9487) (Filobasidiella neoformans var. grubii).